We begin with the raw amino-acid sequence, 398 residues long: Chalcone synthase 1 (398 aa).

Cysteine 167 is a catalytic residue.

It belongs to the thiolase-like superfamily. Chalcone/stilbene synthases family.

The enzyme catalyses (E)-4-coumaroyl-CoA + 3 malonyl-CoA + 3 H(+) = 2',4,4',6'-tetrahydroxychalcone + 3 CO2 + 4 CoA. It participates in secondary metabolite biosynthesis; flavonoid biosynthesis. Functionally, the primary product of this enzyme is 4,2',4',6'-tetrahydroxychalcone (also termed naringenin-chalcone or chalcone) which can under specific conditions spontaneously isomerize into naringenin. This Gerbera hybrida (Daisy) protein is Chalcone synthase 1 (CHS1).